A 343-amino-acid polypeptide reads, in one-letter code: MHIICKSQCGNRAALKRPKTGDALCKECFFAAFEAEIHHTISSSNLFRRGEKVAVAASGGKDSTVLAHVLKLLNERHNYGLELVLLSIDEGITGYRDDSLETVKQNRDDYQMPLKILSYEELYGWTMDRIVAQIGRSNNCTFCGVFRRQALDRGAKLLGVDSIATGHNADDIAETVLMNVLRGDTARLRRCTSIRTGGGEDTIPRVKPLKYSYEKEIVMYAHYKKLVYFSTECVFAPNAYRGHARAFLKDLEKVRPSVIMDIIYSGEQLRFKDTVKKPERGTCTRCGFVSSQQPCKACVLLEGLNRGLPKLGIGKKSKGERMIAKQNQELALRERANLVKNDF.

It belongs to the TtcA family. CTU1/NCS6/ATPBD3 subfamily.

The protein resides in the cytoplasm. It functions in the pathway tRNA modification; 5-methoxycarbonylmethyl-2-thiouridine-tRNA biosynthesis. Its function is as follows. Plays a central role in 2-thiolation of mcm(5)S(2)U at tRNA wobble positions of tRNA(Lys), tRNA(Glu) and tRNA(Gln). Directly binds tRNAs and probably acts by catalyzing adenylation of tRNAs, an intermediate required for 2-thiolation. It is unclear whether it acts as a sulfurtransferase that transfers sulfur from thiocarboxylated URM1 onto the uridine of tRNAs at wobble position. The chain is Cytoplasmic tRNA 2-thiolation protein 1 from Drosophila melanogaster (Fruit fly).